A 977-amino-acid polypeptide reads, in one-letter code: Monofunctional C1-tetrahydrofolate synthase, mitochondrial (977 aa).

The N-terminal 31 residues, 1–31 (MSVRLPLLLRQLGRQQLPSGPACRLRELCRS), are a transit peptide targeting the mitochondrion. Positions 29 to 71 (CRSGSRSSSSGGGDPEGLRGRRLQDGQTFSSHGPGNPEAPGMD) are disordered. The segment at 32-347 (GSRSSSSGGG…REQQHRRWRL (316 aa)) is methylenetetrahydrofolate dehydrogenase and cyclohydrolase. At K188 the chain carries N6-acetyllysine; alternate. K188 is modified (N6-succinyllysine; alternate). The formyltetrahydrofolate synthetase stretch occupies residues 348–977 (HCLKLQPLSP…TETEQVKGLF (630 aa)). At S356 the chain carries Phosphoserine. Position 422–429 (422–429 (TPLGEGKS)) interacts with ATP. The residue at position 595 (K595) is an N6-succinyllysine.

It in the N-terminal section; belongs to the tetrahydrofolate dehydrogenase/cyclohydrolase family. The protein in the C-terminal section; belongs to the formate--tetrahydrofolate ligase family. In terms of assembly, homodimer.

It localises to the mitochondrion. The enzyme catalyses (6S)-5,6,7,8-tetrahydrofolate + formate + ATP = (6R)-10-formyltetrahydrofolate + ADP + phosphate. It functions in the pathway one-carbon metabolism; tetrahydrofolate interconversion. Its function is as follows. May provide the missing metabolic reaction required to link the mitochondria and the cytoplasm in the mammalian model of one-carbon folate metabolism complementing thus the enzymatic activities of MTHFD2. This chain is Monofunctional C1-tetrahydrofolate synthase, mitochondrial (Mthfd1l), found in Mus musculus (Mouse).